A 529-amino-acid chain; its full sequence is MKNELYADEIAARRTFAIISHPDAGKTTITEKVLLFGQAIQTAGTVKGRGSNQHAKSDWMEMEKQRGISITTSVMQFPYRQALVNLLDTPGHEDFSEDTYRTLTAVDCCLMVIDAAKGVEDRTRKLMEVTRLRDTPILTFMNKVDRDIRDPMELLDEVESELRIACAPITWPIGCGKLFKGIYHLAKDETYLYQSGQGHTIQAVRVVKGLDNPELDQAVGEDLAAQLREELELVQGASHPFDEQAFLAGELTPIFFGTALGNFGIDHMLDGLVAWAPPPMPRQTDVRVVSAREEKFTGFVFKIQANMDPRHRDRVAFLRVVSGRYEKSMKLRQVRTGKDVVIADALTFMAGDRSHIEEAYAGDIIGLHNHGTIQIGDTFTQGEELKFTGIPNFAPELFRRIRLRDPLKQKQLLKGLVQLSEEGAVQVFRPLANNDLIVGAVGVLQFDVVVARLKSEYNVEALYEPVNVSTARWVECGDAKKLEEFKRKNELNLVLDGGDNLSYIAPSMVNLNLTRERYPDIQFHKTREH.

A tr-type G domain is found at 11 to 280 (AARRTFAIIS…GLVAWAPPPM (270 aa)). Residues 20–27 (SHPDAGKT), 88–92 (DTPGH), and 142–145 (NKVD) each bind GTP.

This sequence belongs to the TRAFAC class translation factor GTPase superfamily. Classic translation factor GTPase family. PrfC subfamily.

It localises to the cytoplasm. Its function is as follows. Increases the formation of ribosomal termination complexes and stimulates activities of RF-1 and RF-2. It binds guanine nucleotides and has strong preference for UGA stop codons. It may interact directly with the ribosome. The stimulation of RF-1 and RF-2 is significantly reduced by GTP and GDP, but not by GMP. The polypeptide is Peptide chain release factor 3 (Sodalis glossinidius (strain morsitans)).